We begin with the raw amino-acid sequence, 68 residues long: U-actitoxin-Avt1 (68 aa).

An N-terminal signal peptide occupies residues M1–A22. Residues T23–R40 constitute a propeptide that is removed on maturation. The segment at Y24–S50 is disordered. Residues P32–S41 are compositionally biased toward basic and acidic residues. 3 disulfide bridges follow: C42–C54, C46–C59, and C52–C66.

Stable protein with probable toxin activity. Does not show activity on all channels tested. Shows no hemolytic activity on rat erythrocytes. This is U-actitoxin-Avt1 from Aulactinia veratra (Green snakelock anemone).